The following is a 141-amino-acid chain: MSVAKAKGAQKTVQKGIHNKVAKKVRTSTTFRRPKTLQLSRKPKYARKSVAHAPRLDEYKIIVNPINSESAMKKIEDDNTLVFHVHLKANKFTIKEAVRKLYSVEPVKINTLIRPNGTKKAFVKLSADADALDVANRIGFL.

Phosphoserine is present on residues Ser68 and Ser70.

The protein belongs to the universal ribosomal protein uL23 family. As to quaternary structure, component of the large ribosomal subunit (LSU). Mature yeast ribosomes consist of a small (40S) and a large (60S) subunit. The 40S small subunit contains 1 molecule of ribosomal RNA (18S rRNA) and at least 33 different proteins. The large 60S subunit contains 3 rRNA molecules (25S, 5.8S and 5S rRNA) and at least 46 different proteins. uL23 is associated with the polypeptide exit tunnel.

The protein localises to the cytoplasm. In terms of biological role, this protein binds to a specific region on the 26S rRNA. Functionally, component of the ribosome, a large ribonucleoprotein complex responsible for the synthesis of proteins in the cell. The small ribosomal subunit (SSU) binds messenger RNAs (mRNAs) and translates the encoded message by selecting cognate aminoacyl-transfer RNA (tRNA) molecules. The large subunit (LSU) contains the ribosomal catalytic site termed the peptidyl transferase center (PTC), which catalyzes the formation of peptide bonds, thereby polymerizing the amino acids delivered by tRNAs into a polypeptide chain. The nascent polypeptides leave the ribosome through a tunnel in the LSU and interact with protein factors that function in enzymatic processing, targeting, and the membrane insertion of nascent chains at the exit of the ribosomal tunnel. uL23 is a major component of the universal docking site for these factors at the polypeptide exit tunnel. This is Large ribosomal subunit protein uL23A (rpl2501) from Schizosaccharomyces pombe (strain 972 / ATCC 24843) (Fission yeast).